A 343-amino-acid polypeptide reads, in one-letter code: UDP-3-O-acylglucosamine N-acyltransferase (343 aa).

His239 (proton acceptor) is an active-site residue.

Belongs to the transferase hexapeptide repeat family. LpxD subfamily. Homotrimer.

The catalysed reaction is a UDP-3-O-[(3R)-3-hydroxyacyl]-alpha-D-glucosamine + a (3R)-hydroxyacyl-[ACP] = a UDP-2-N,3-O-bis[(3R)-3-hydroxyacyl]-alpha-D-glucosamine + holo-[ACP] + H(+). It functions in the pathway bacterial outer membrane biogenesis; LPS lipid A biosynthesis. Catalyzes the N-acylation of UDP-3-O-acylglucosamine using 3-hydroxyacyl-ACP as the acyl donor. Is involved in the biosynthesis of lipid A, a phosphorylated glycolipid that anchors the lipopolysaccharide to the outer membrane of the cell. The protein is UDP-3-O-acylglucosamine N-acyltransferase of Vibrio vulnificus (strain YJ016).